A 279-amino-acid polypeptide reads, in one-letter code: uncharacterized protein (279 aa).

This is an uncharacterized protein from Caenorhabditis elegans.